A 361-amino-acid chain; its full sequence is Chorismate synthase (361 aa).

NADP(+)-binding residues include arginine 48 and arginine 54. FMN contacts are provided by residues 125 to 127 (RSS), 238 to 239 (NA), glycine 278, 293 to 297 (KPTSS), and arginine 319.

The protein belongs to the chorismate synthase family. In terms of assembly, homotetramer. Requires FMNH2 as cofactor.

The enzyme catalyses 5-O-(1-carboxyvinyl)-3-phosphoshikimate = chorismate + phosphate. The protein operates within metabolic intermediate biosynthesis; chorismate biosynthesis; chorismate from D-erythrose 4-phosphate and phosphoenolpyruvate: step 7/7. Functionally, catalyzes the anti-1,4-elimination of the C-3 phosphate and the C-6 proR hydrogen from 5-enolpyruvylshikimate-3-phosphate (EPSP) to yield chorismate, which is the branch point compound that serves as the starting substrate for the three terminal pathways of aromatic amino acid biosynthesis. This reaction introduces a second double bond into the aromatic ring system. This chain is Chorismate synthase, found in Escherichia coli O157:H7.